A 1172-amino-acid chain; its full sequence is DNA-directed RNA polymerase subunit beta (1172 aa).

This sequence belongs to the RNA polymerase beta chain family. The RNAP catalytic core consists of 2 alpha, 1 beta, 1 beta' and 1 omega subunit. When a sigma factor is associated with the core the holoenzyme is formed, which can initiate transcription.

It catalyses the reaction RNA(n) + a ribonucleoside 5'-triphosphate = RNA(n+1) + diphosphate. DNA-dependent RNA polymerase catalyzes the transcription of DNA into RNA using the four ribonucleoside triphosphates as substrates. The sequence is that of DNA-directed RNA polymerase subunit beta from Thermosipho melanesiensis (strain DSM 12029 / CIP 104789 / BI429).